Consider the following 448-residue polypeptide: Probable glycine dehydrogenase (decarboxylating) subunit 1 (448 aa).

Belongs to the GcvP family. N-terminal subunit subfamily. The glycine cleavage system is composed of four proteins: P, T, L and H. In this organism, the P 'protein' is a heterodimer of two subunits.

It catalyses the reaction N(6)-[(R)-lipoyl]-L-lysyl-[glycine-cleavage complex H protein] + glycine + H(+) = N(6)-[(R)-S(8)-aminomethyldihydrolipoyl]-L-lysyl-[glycine-cleavage complex H protein] + CO2. In terms of biological role, the glycine cleavage system catalyzes the degradation of glycine. The P protein binds the alpha-amino group of glycine through its pyridoxal phosphate cofactor; CO(2) is released and the remaining methylamine moiety is then transferred to the lipoamide cofactor of the H protein. This is Probable glycine dehydrogenase (decarboxylating) subunit 1 from Listeria monocytogenes serotype 4b (strain CLIP80459).